A 412-amino-acid polypeptide reads, in one-letter code: Putative competence-damage inducible protein (412 aa).

The protein belongs to the CinA family.

This Clostridium perfringens (strain SM101 / Type A) protein is Putative competence-damage inducible protein.